The primary structure comprises 210 residues: Protein-methionine-sulfoxide reductase heme-binding subunit MsrQ (210 aa).

Transmembrane regions (helical) follow at residues Leu8–Phe28, Val37–Thr57, Leu75–Leu95, Pro110–Asn130, Leu147–Leu167, and Glu169–Ala189.

Belongs to the MsrQ family. In terms of assembly, heterodimer of a catalytic subunit (MsrP) and a heme-binding subunit (MsrQ). It depends on FMN as a cofactor. The cofactor is heme b.

Its subcellular location is the cell inner membrane. Functionally, part of the MsrPQ system that repairs oxidized periplasmic proteins containing methionine sulfoxide residues (Met-O), using respiratory chain electrons. Thus protects these proteins from oxidative-stress damage caused by reactive species of oxygen and chlorine generated by the host defense mechanisms. MsrPQ is essential for the maintenance of envelope integrity under bleach stress, rescuing a wide series of structurally unrelated periplasmic proteins from methionine oxidation. MsrQ provides electrons for reduction to the reductase catalytic subunit MsrP, using the quinone pool of the respiratory chain. In Pseudomonas syringae pv. tomato (strain ATCC BAA-871 / DC3000), this protein is Protein-methionine-sulfoxide reductase heme-binding subunit MsrQ.